The following is a 243-amino-acid chain: Segregation and condensation protein A (243 aa).

It belongs to the ScpA family. In terms of assembly, component of a cohesin-like complex composed of ScpA, ScpB and the Smc homodimer, in which ScpA and ScpB bind to the head domain of Smc. The presence of the three proteins is required for the association of the complex with DNA.

Its subcellular location is the cytoplasm. In terms of biological role, participates in chromosomal partition during cell division. May act via the formation of a condensin-like complex containing Smc and ScpB that pull DNA away from mid-cell into both cell halves. This is Segregation and condensation protein A from Thermoanaerobacter pseudethanolicus (strain ATCC 33223 / 39E) (Clostridium thermohydrosulfuricum).